The following is a 201-amino-acid chain: Holliday junction branch migration complex subunit RuvA (201 aa).

Positions 1 to 64 (MIGRLRGTLA…EDAQLLYGFA (64 aa)) are domain I. A domain II region spans residues 65-143 (EKRERELFRE…AWESMPAIAT (79 aa)). Residues 144–152 (LVVEPGSKT) are flexible linker. The tract at residues 153-201 (AVTSAENDAVSALISLGFKPQEASRAVSAIQEENLSSEEMIRRALKGMV) is domain III.

It belongs to the RuvA family. As to quaternary structure, homotetramer. Forms an RuvA(8)-RuvB(12)-Holliday junction (HJ) complex. HJ DNA is sandwiched between 2 RuvA tetramers; dsDNA enters through RuvA and exits via RuvB. An RuvB hexamer assembles on each DNA strand where it exits the tetramer. Each RuvB hexamer is contacted by two RuvA subunits (via domain III) on 2 adjacent RuvB subunits; this complex drives branch migration. In the full resolvosome a probable DNA-RuvA(4)-RuvB(12)-RuvC(2) complex forms which resolves the HJ.

It localises to the cytoplasm. In terms of biological role, the RuvA-RuvB-RuvC complex processes Holliday junction (HJ) DNA during genetic recombination and DNA repair, while the RuvA-RuvB complex plays an important role in the rescue of blocked DNA replication forks via replication fork reversal (RFR). RuvA specifically binds to HJ cruciform DNA, conferring on it an open structure. The RuvB hexamer acts as an ATP-dependent pump, pulling dsDNA into and through the RuvAB complex. HJ branch migration allows RuvC to scan DNA until it finds its consensus sequence, where it cleaves and resolves the cruciform DNA. This chain is Holliday junction branch migration complex subunit RuvA, found in Stutzerimonas stutzeri (strain A1501) (Pseudomonas stutzeri).